Here is a 267-residue protein sequence, read N- to C-terminus: Small ribosomal subunit protein uS2c (267 aa).

Residues 237–267 (KQKIKKTGVKISGNRRTSSITKKRNPASSKI) form a disordered region. The span at 250–267 (NRRTSSITKKRNPASSKI) shows a compositional bias: polar residues.

This sequence belongs to the universal ribosomal protein uS2 family.

It is found in the plastid. The protein resides in the chloroplast. This Chlorella vulgaris (Green alga) protein is Small ribosomal subunit protein uS2c (rps2).